A 224-amino-acid chain; its full sequence is UPF0758 protein PSHAa2643 (224 aa).

An MPN domain is found at 102–224 (IFNSPNAVYD…CVSFAERGLI (123 aa)). Positions 173, 175, and 186 each coordinate Zn(2+). The short motif at 173-186 (HNHPSGIAEPSQAD) is the JAMM motif element.

The protein belongs to the UPF0758 family.

The polypeptide is UPF0758 protein PSHAa2643 (Pseudoalteromonas translucida (strain TAC 125)).